The primary structure comprises 191 residues: ATP-dependent dethiobiotin synthetase BioD 2 (191 aa).

An ATP-binding site is contributed by 13–18; that stretch reads DVGKTI. A Mg(2+)-binding site is contributed by Thr-17. The active site involves Lys-38. Thr-42 serves as a coordination point for substrate. ATP contacts are provided by residues Asp-50 and 115–118; that span reads EGAG. Positions 50 and 115 each coordinate Mg(2+).

The protein belongs to the dethiobiotin synthetase family. As to quaternary structure, homodimer. The cofactor is Mg(2+).

Its subcellular location is the cytoplasm. It catalyses the reaction (7R,8S)-7,8-diammoniononanoate + CO2 + ATP = (4R,5S)-dethiobiotin + ADP + phosphate + 3 H(+). It functions in the pathway cofactor biosynthesis; biotin biosynthesis; biotin from 7,8-diaminononanoate: step 1/2. In terms of biological role, catalyzes a mechanistically unusual reaction, the ATP-dependent insertion of CO2 between the N7 and N8 nitrogen atoms of 7,8-diaminopelargonic acid (DAPA, also called 7,8-diammoniononanoate) to form a ureido ring. The chain is ATP-dependent dethiobiotin synthetase BioD 2 from Haemophilus influenzae (strain ATCC 51907 / DSM 11121 / KW20 / Rd).